The sequence spans 695 residues: Translation initiation factor IF-2 (695 aa).

Residues 60–92 (KKSASSKKKTEKEVEEEEIETPKKKKKQEEKIP) form a disordered region. Positions 184–358 (QRPPVVTVMG…EMSEIKCIPT (175 aa)) constitute a tr-type G domain. Residues 193–200 (GHVDHGKT) form a G1 region. 193–200 (GHVDHGKT) is a binding site for GTP. The segment at 218-222 (GITQS) is G2. A G3 region spans residues 239-242 (DTPG). Residues 239 to 243 (DTPGH) and 293 to 296 (NKID) each bind GTP. Residues 293–296 (NKID) form a G4 region. Residues 330 to 332 (SAK) are G5.

Belongs to the TRAFAC class translation factor GTPase superfamily. Classic translation factor GTPase family. IF-2 subfamily.

The protein resides in the cytoplasm. In terms of biological role, one of the essential components for the initiation of protein synthesis. Protects formylmethionyl-tRNA from spontaneous hydrolysis and promotes its binding to the 30S ribosomal subunits. Also involved in the hydrolysis of GTP during the formation of the 70S ribosomal complex. The polypeptide is Translation initiation factor IF-2 (Kosmotoga olearia (strain ATCC BAA-1733 / DSM 21960 / TBF 19.5.1)).